Here is a 445-residue protein sequence, read N- to C-terminus: Ubiquitin carboxyl-terminal hydrolase MINDY-3 (445 aa).

The Nucleophile role is filled by Cys-51. Ser-125 is subject to Phosphoserine. The Proton acceptor role is filled by His-287.

It belongs to the MINDY deubiquitinase family. FAM188 subfamily. As to quaternary structure, interacts with COPS5.

It is found in the nucleus. The catalysed reaction is Thiol-dependent hydrolysis of ester, thioester, amide, peptide and isopeptide bonds formed by the C-terminal Gly of ubiquitin (a 76-residue protein attached to proteins as an intracellular targeting signal).. Functionally, hydrolase that can remove 'Lys-48'-linked conjugated ubiquitin from proteins. In Bos taurus (Bovine), this protein is Ubiquitin carboxyl-terminal hydrolase MINDY-3 (MINDY3).